The following is a 406-amino-acid chain: Probable mannan endo-1,4-beta-mannosidase C (406 aa).

The signal sequence occupies residues 1–20 (MLINFEKVLSLALLAGSVSG). Asn-58 is a glycosylation site (N-linked (GlcNAc...) asparagine). Substrate is bound at residue Trp-80. Asn-86 and Asn-114 each carry an N-linked (GlcNAc...) asparagine glycan. Asn-201 lines the substrate pocket. The active-site Proton donor is Glu-202. Tyr-287 lines the substrate pocket. Residue Glu-320 is the Nucleophile of the active site. A glycan (N-linked (GlcNAc...) asparagine) is linked at Asn-338. Trp-362 lines the substrate pocket.

Belongs to the glycosyl hydrolase 5 (cellulase A) family.

The protein resides in the secreted. It carries out the reaction Random hydrolysis of (1-&gt;4)-beta-D-mannosidic linkages in mannans, galactomannans and glucomannans.. Its function is as follows. Endo-1,4-mannanase, a crucial enzyme for depolymerization of seed galactomannans and wood galactoglucomannans. This is Probable mannan endo-1,4-beta-mannosidase C (manC) from Aspergillus terreus (strain NIH 2624 / FGSC A1156).